Here is a 280-residue protein sequence, read N- to C-terminus: NAD kinase (280 aa).

The active-site Proton acceptor is D60. NAD(+) is bound by residues 60–61, 134–135, R145, D164, 175–180, and Q234; these read DG, ND, and TAYSLS.

This sequence belongs to the NAD kinase family. A divalent metal cation serves as cofactor.

It is found in the cytoplasm. It catalyses the reaction NAD(+) + ATP = ADP + NADP(+) + H(+). Functionally, involved in the regulation of the intracellular balance of NAD and NADP, and is a key enzyme in the biosynthesis of NADP. Catalyzes specifically the phosphorylation on 2'-hydroxyl of the adenosine moiety of NAD to yield NADP. This is NAD kinase from Carboxydothermus hydrogenoformans (strain ATCC BAA-161 / DSM 6008 / Z-2901).